A 955-amino-acid polypeptide reads, in one-letter code: Leucine--tRNA ligase (955 aa).

The 'HIGH' region motif lies at 51–61 (PYLNGVLHAGH). A 'KMSKS' region motif is present at residues 647-651 (KLSKS). Lys650 serves as a coordination point for ATP.

This sequence belongs to the class-I aminoacyl-tRNA synthetase family.

Its subcellular location is the cytoplasm. It carries out the reaction tRNA(Leu) + L-leucine + ATP = L-leucyl-tRNA(Leu) + AMP + diphosphate. This is Leucine--tRNA ligase from Methanococcus maripaludis (strain C7 / ATCC BAA-1331).